The following is a 264-amino-acid chain: MKQYLELMQKVLDEGTQKNDRTGTGTLSIFGHQMRFNLQDGFPLVTTKRCHLRSIIHELLWFLQGNTNIAYLHENNVTIWDEWADENGDLGPVYGKQWRAWPTPDGRHIDQITTVLNQLKNDPDSRRIIVSAWNVGELDKMALAPCHAFFQFYVADGKLSCQLYQRSCDVFLGLPFNIASYALLVHMMAQQCDLEVGDFVWTGGDTHLYSNHMDQTHLQLSREPRPLPKLIIKRKPESIFDYRFEDFEIEGYDPHPGIKAPVAI.

A dUMP-binding site is contributed by R21. H51 is a binding site for (6R)-5,10-methylene-5,6,7,8-tetrahydrofolate. 126–127 (RR) provides a ligand contact to dUMP. The active-site Nucleophile is the C146. Residues 166–169 (RSCD), N177, and 207–209 (HLY) contribute to the dUMP site. D169 lines the (6R)-5,10-methylene-5,6,7,8-tetrahydrofolate pocket. A263 contacts (6R)-5,10-methylene-5,6,7,8-tetrahydrofolate.

This sequence belongs to the thymidylate synthase family. Bacterial-type ThyA subfamily. As to quaternary structure, homodimer.

The protein localises to the cytoplasm. The enzyme catalyses dUMP + (6R)-5,10-methylene-5,6,7,8-tetrahydrofolate = 7,8-dihydrofolate + dTMP. Its pathway is pyrimidine metabolism; dTTP biosynthesis. Catalyzes the reductive methylation of 2'-deoxyuridine-5'-monophosphate (dUMP) to 2'-deoxythymidine-5'-monophosphate (dTMP) while utilizing 5,10-methylenetetrahydrofolate (mTHF) as the methyl donor and reductant in the reaction, yielding dihydrofolate (DHF) as a by-product. This enzymatic reaction provides an intracellular de novo source of dTMP, an essential precursor for DNA biosynthesis. This Escherichia coli O9:H4 (strain HS) protein is Thymidylate synthase.